A 335-amino-acid chain; its full sequence is Olfactory receptor 9K2 (335 aa).

Residues 1-50 (MLGSKPRVHLYILPCASQQVSTMGDRGTSNHSEMTDFILAGFRVRPELHI) lie on the Extracellular side of the membrane. Residue Asn-30 is glycosylated (N-linked (GlcNAc...) asparagine). A helical transmembrane segment spans residues 51-71 (LLFLLFLFVYAMILLGNVGMM). The Cytoplasmic portion of the chain corresponds to 72–79 (TIIMTDPR). A helical transmembrane segment spans residues 80 to 100 (LNTPMYFFLGNLSFIDLFYSS). Over 101 to 124 (VIEPKAMINFWSENKSISFAGCVA) the chain is Extracellular. N-linked (GlcNAc...) asparagine glycosylation occurs at Asn-114. Cys-122 and Cys-214 form a disulfide bridge. Residues 125–145 (QLFLFALLIVTEGFLLAAMAY) form a helical membrane-spanning segment. Residues 146 to 164 (DRFIAICNPLLYSVQMSTR) lie on the Cytoplasmic side of the membrane. Residues 165–185 (LCTQLVAGSYFCGCISSVIQT) traverse the membrane as a helical segment. Residues 186–222 (SMTFTLSFCASRAVDHFYCDSRPLQRLSCSDLFIHRM) are Extracellular-facing. The helical transmembrane segment at 223-242 (ISFSLSCIIILPTIIVIIVS) threads the bilayer. The Cytoplasmic segment spans residues 243-262 (YMYIVSTVLKIHSTEGHKKA). A helical transmembrane segment spans residues 263-283 (FSTCSSHLGVVSVLYGAVFFM). Topologically, residues 284–296 (YLTPDRFPELSKV) are extracellular. The Cytoplasmic portion of the chain corresponds to 316 to 335 (RNKDVQEALKKFLEKKNIIL).

This sequence belongs to the G-protein coupled receptor 1 family.

The protein localises to the cell membrane. Odorant receptor. This chain is Olfactory receptor 9K2 (OR9K2), found in Homo sapiens (Human).